Reading from the N-terminus, the 706-residue chain is Melanopsin (706 aa).

Topologically, residues 1-86 are extracellular; that stretch reads MTEIPSFQPP…VWDIPPLAHY (86 aa). N-linked (GlcNAc...) asparagine glycans are attached at residues N12, N64, and N69. The chain crosses the membrane as a helical span at residues 87 to 107; sequence IVGTAVFCIGCCGMFGNAVVV. Topologically, residues 108-121 are cytoplasmic; that stretch reads YSFIKSKGLRTPAN. Residues 122–142 form a helical membrane-spanning segment; sequence FFIINLALSDFLMNLTNMPIF. Topologically, residues 143–159 are extracellular; it reads AVNSAFQRWLLSDFACE. A disulfide bridge links C158 with C236. The helical transmembrane segment at 160–180 threads the bilayer; that stretch reads LYGFAGGLFGCLSINTLMAIS. Topologically, residues 181-201 are cytoplasmic; the sequence is MDRYLVITKPFLVMRIVTKQR. Residues 202 to 222 form a helical membrane-spanning segment; it reads VMFAILLLWIWSLVWALPPLF. Topologically, residues 223 to 248 are extracellular; it reads GWSAYVSEGFGTSCTFDYMTPKLSYH. Residues 249–269 traverse the membrane as a helical segment; that stretch reads IFTYIIFFTMYFIPGGVMIYC. Residues 270 to 314 lie on the Cytoplasmic side of the membrane; the sequence is YYNIFATVKSGDKQFGKAVKEMAHEDVKNKAQQERQRKNEIKTAK. A helical transmembrane segment spans residues 315–335; that stretch reads IAFIVISLFMSAWTPYAVVSA. Topologically, residues 336-351 are extracellular; the sequence is LGTLGYQDLVTPYLQS. A helical transmembrane segment spans residues 352–372; that stretch reads IPAMFAKSSAVYSPIVYAITY. K358 is modified (N6-(retinylidene)lysine). Topologically, residues 373 to 706 are cytoplasmic; it reads PKFREAVKKH…LSEAHDETVL (334 aa). Disordered stretches follow at residues 393 to 446, 571 to 599, and 630 to 658; these read SEEE…RQDT, RTESGYDRSQDSQRKKVVGDTHRSRSFNT, and QSSEKHEYDNPAFDEGITEVDTDSENETE. 2 stretches are compositionally biased toward low complexity: residues 404–418 and 426–442; these read QSSASASMSMTQTTA and SVDSGSSVSVDDSSGVS. The span at 571–593 shows a compositional bias: basic and acidic residues; the sequence is RTESGYDRSQDSQRKKVVGDTHR. Positions 645–658 are enriched in acidic residues; that stretch reads GITEVDTDSENETE.

The protein belongs to the G-protein coupled receptor 1 family. Opsin subfamily. As to expression, expressed in Joseph cells and photoreceptor cells of the dorsal ocelli.

It localises to the cell membrane. In terms of biological role, photoreceptor implicated in non-image-forming responses to light. Photoisomerizes covalently bound all-trans retinal back to 11-cis retinal. Most likely coupled to the G(q) signaling cascade. This is Melanopsin from Branchiostoma belcheri (Amphioxus).